A 405-amino-acid chain; its full sequence is Tyrosine--tRNA ligase (405 aa).

The 'HIGH' region motif lies at 46–55 (PTRPDIHLGH). The 'KMSKS' region signature appears at 230–234 (KMSKS). An ATP-binding site is contributed by Lys233. One can recognise an S4 RNA-binding domain in the interval 341–404 (MGLAALMVKA…GKKKFVKIVV (64 aa)).

The protein belongs to the class-I aminoacyl-tRNA synthetase family. TyrS type 2 subfamily. In terms of assembly, homodimer.

It is found in the cytoplasm. It carries out the reaction tRNA(Tyr) + L-tyrosine + ATP = L-tyrosyl-tRNA(Tyr) + AMP + diphosphate + H(+). Catalyzes the attachment of tyrosine to tRNA(Tyr) in a two-step reaction: tyrosine is first activated by ATP to form Tyr-AMP and then transferred to the acceptor end of tRNA(Tyr). The polypeptide is Tyrosine--tRNA ligase (Bdellovibrio bacteriovorus (strain ATCC 15356 / DSM 50701 / NCIMB 9529 / HD100)).